The following is a 1110-amino-acid chain: Nonribisomal peptide synthetase benY (1110 aa).

An adenylation region spans residues 47–443; sequence RALEFPEKIA…GRKDHQLKVR (397 aa). A Carrier domain is found at 575–651; sequence TLETESEKIL…EMAQSARVVP (77 aa). Residue serine 612 is modified to O-(pantetheine 4'-phosphoryl)serine. The segment at 713 to 1025 is condensation; the sequence is YILDGDVDFD…IFHHQNIDTK (313 aa).

It belongs to the NRP synthetase family.

It functions in the pathway secondary metabolite biosynthesis. In terms of biological role, nonribisomal peptide synthetase; part of the gene cluster that mediates the biosynthesis of benzomalvin A and D. The pathway begins with the loading of amino acid precursors onto the A domains of the non ribosomal peptide synthetases benY and benZ. BenY and the A1 domain of benZ are loaded with anthranilate (Anth), while the A2 domain of benZ is loaded with phenylalanine (Phe). N-methylation of Phe by the methyltransferase benX may happen before loading of Phe onto benZ, after loading of Phe, or after dipeptide formation. Condensation of Anth with the secondary amine of NmPhe or Phe is catalyzed by the C1 domain of benZ, forming a dipeptide intermediate. This is followed by in trans condensation of the Anth-NmPhe dipeptide with Anth bound to the T domain of benY by the C2 domain of benZ to form the linear tripeptide Anth-NmPhe-Anth. Cyclization and release of the tripeptide is then catalyzed by the C-terminal C domain of benY and the resulting 11-member macrocyclic intermediate is expected to spontaneously collapse to form the benzodiazepine core. Benzomalvin A is in conformational equilibrium with its atropisomer, benzomalvin D. This chain is Nonribisomal peptide synthetase benY, found in Aspergillus terreus.